The primary structure comprises 180 residues: Large ribosomal subunit protein uL5 (180 aa).

It belongs to the universal ribosomal protein uL5 family. In terms of assembly, part of the 50S ribosomal subunit; part of the 5S rRNA/L5/L18/L25 subcomplex. Contacts the 5S rRNA and the P site tRNA. Forms a bridge to the 30S subunit in the 70S ribosome.

In terms of biological role, this is one of the proteins that bind and probably mediate the attachment of the 5S RNA into the large ribosomal subunit, where it forms part of the central protuberance. In the 70S ribosome it contacts protein S13 of the 30S subunit (bridge B1b), connecting the 2 subunits; this bridge is implicated in subunit movement. Contacts the P site tRNA; the 5S rRNA and some of its associated proteins might help stabilize positioning of ribosome-bound tRNAs. The protein is Large ribosomal subunit protein uL5 of Polynucleobacter necessarius subsp. necessarius (strain STIR1).